The following is a 476-amino-acid chain: Cytochrome c oxidase subunit 1 (476 aa).

A helical transmembrane segment spans residues 19-39; the sequence is LYYLWFSFLFGTYGFLLSVIL. Ca(2+) is bound at residue Glu42. 8 helical membrane passes run 61–81, 105–125, 144–164, 194–214, 240–260, 278–298, 309–329, and 345–365; these read MIFTIHGIIMIFFNIMPGLFG, ISLLLQPIAFILVILSTAAEF, LSPVAVDVIIIGLLVSGIASI, IIITSIMLLLTLPVLTGGVLM, LFWFFGHPEVYILILPAFGVI, MILAMGCIAVLGSVVWVHHMY, FFTSTTILISIPTGTKVFNWL, and LLCLLFICTFTFGGTTGVILG. His66 contacts Fe(II)-heme a. Residue His246 participates in Cu cation binding. Residues 246–250 constitute a cross-link (1'-histidyl-3'-tyrosine (His-Tyr)); that stretch reads HPEVY. O2 is bound at residue Tyr250. Residues His295 and His296 each coordinate Cu cation. Positions 374 and 375 each coordinate Mg(2+). The next 2 helical transmembrane spans lie at 379–399 and 415–435; these read VIAHFHFVLSIGAIIALFTCV and TLIVLWSILFFIGVILTFLPM. Position 382 (His382) interacts with heme a3. Fe(II)-heme a is bound at residue His384. Pro448 contacts Ca(2+). Residues 455 to 475 form a helical membrane-spanning segment; it reads NGWNMICSIGSTMTLFGLLIF.

Belongs to the heme-copper respiratory oxidase family. In terms of assembly, component of the cytochrome c oxidase (complex IV, CIV), a multisubunit enzyme composed of a catalytic core of 3 subunits and several supernumerary subunits. The complex exists as a monomer or a dimer and forms supercomplexes (SCs) in the inner mitochondrial membrane with ubiquinol-cytochrome c oxidoreductase (cytochrome b-c1 complex, complex III, CIII). Requires heme as cofactor. Cu cation is required as a cofactor.

The protein resides in the mitochondrion inner membrane. It catalyses the reaction 4 Fe(II)-[cytochrome c] + O2 + 8 H(+)(in) = 4 Fe(III)-[cytochrome c] + 2 H2O + 4 H(+)(out). It functions in the pathway energy metabolism; oxidative phosphorylation. Component of the cytochrome c oxidase, the last enzyme in the mitochondrial electron transport chain which drives oxidative phosphorylation. The respiratory chain contains 3 multisubunit complexes succinate dehydrogenase (complex II, CII), ubiquinol-cytochrome c oxidoreductase (cytochrome b-c1 complex, complex III, CIII) and cytochrome c oxidase (complex IV, CIV), that cooperate to transfer electrons derived from NADH and succinate to molecular oxygen, creating an electrochemical gradient over the inner membrane that drives transmembrane transport and the ATP synthase. Cytochrome c oxidase is the component of the respiratory chain that catalyzes the reduction of oxygen to water. Electrons originating from reduced cytochrome c in the intermembrane space (IMS) are transferred via the dinuclear copper A center (CU(A)) of subunit 2 and heme A of subunit 1 to the active site in subunit 1, a binuclear center (BNC) formed by heme A3 and copper B (CU(B)). The BNC reduces molecular oxygen to 2 water molecules using 4 electrons from cytochrome c in the IMS and 4 protons from the mitochondrial matrix. The chain is Cytochrome c oxidase subunit 1 (COI) from Plasmodium berghei.